A 295-amino-acid chain; its full sequence is Protease HtpX (295 aa).

2 consecutive transmembrane segments (helical) span residues 4–24 (ILLFLATNLAVVLIASITLSL) and 42–62 (QLLVFCAVFGFAGSLFSLFIS). Histidine 147 is a Zn(2+) binding site. Residue glutamate 148 is part of the active site. Histidine 151 provides a ligand contact to Zn(2+). 2 helical membrane passes run 158 to 178 (VTLALVQGVVNTFVMFFARII) and 199 to 219 (ITTIFAELVLGFLASAIVMWF). Glutamate 224 lines the Zn(2+) pocket.

Belongs to the peptidase M48B family. Zn(2+) is required as a cofactor.

Its subcellular location is the cell inner membrane. The sequence is that of Protease HtpX from Pseudomonas savastanoi pv. phaseolicola (strain 1448A / Race 6) (Pseudomonas syringae pv. phaseolicola (strain 1448A / Race 6)).